Reading from the N-terminus, the 492-residue chain is Alpha-amylase-related protein (492 aa).

The signal sequence occupies residues Met1 to Ala18. The residue at position 19 (Gln19) is a Pyrrolidone carboxylic acid. A disulfide bond links Cys46 and Cys102. 3 residues coordinate Ca(2+): Asn116, Gln167, and Asp176. The cysteines at positions 155 and 169 are disulfide-linked. Arg204 provides a ligand contact to chloride. Asp206 functions as the Nucleophile in the catalytic mechanism. His210 lines the Ca(2+) pocket. Glu243 functions as the Proton donor in the catalytic mechanism. Residues Asn306 and Arg341 each contribute to the chloride site. Intrachain disulfides connect Cys374-Cys380, Cys416-Cys439, and Cys446-Cys458.

The protein belongs to the glycosyl hydrolase 13 family. As to quaternary structure, monomer. Ca(2+) serves as cofactor. Chloride is required as a cofactor.

The protein resides in the secreted. It catalyses the reaction Endohydrolysis of (1-&gt;4)-alpha-D-glucosidic linkages in polysaccharides containing three or more (1-&gt;4)-alpha-linked D-glucose units.. This Drosophila willistoni (Fruit fly) protein is Alpha-amylase-related protein (Amyrel).